The primary structure comprises 956 residues: Glycine dehydrogenase (decarboxylating) (956 aa).

Residue Lys-697 is modified to N6-(pyridoxal phosphate)lysine.

It belongs to the GcvP family. As to quaternary structure, the glycine cleavage system is composed of four proteins: P, T, L and H. Pyridoxal 5'-phosphate is required as a cofactor.

The catalysed reaction is N(6)-[(R)-lipoyl]-L-lysyl-[glycine-cleavage complex H protein] + glycine + H(+) = N(6)-[(R)-S(8)-aminomethyldihydrolipoyl]-L-lysyl-[glycine-cleavage complex H protein] + CO2. In terms of biological role, the glycine cleavage system catalyzes the degradation of glycine. The P protein binds the alpha-amino group of glycine through its pyridoxal phosphate cofactor; CO(2) is released and the remaining methylamine moiety is then transferred to the lipoamide cofactor of the H protein. In Cereibacter sphaeroides (strain KD131 / KCTC 12085) (Rhodobacter sphaeroides), this protein is Glycine dehydrogenase (decarboxylating).